The primary structure comprises 231 residues: Uracil phosphoribosyltransferase (231 aa).

38–42 (KGLVR) contacts GTP. 5-phospho-alpha-D-ribose 1-diphosphate-binding positions include Arg87, Arg112, and 140–148 (DPMIATGST). Uracil-binding positions include Ile203 and 208–210 (GDA). Asp209 is a binding site for 5-phospho-alpha-D-ribose 1-diphosphate.

Belongs to the UPRTase family. Mg(2+) is required as a cofactor.

It catalyses the reaction UMP + diphosphate = 5-phospho-alpha-D-ribose 1-diphosphate + uracil. It functions in the pathway pyrimidine metabolism; UMP biosynthesis via salvage pathway; UMP from uracil: step 1/1. Its activity is regulated as follows. Allosterically activated by GTP. In terms of biological role, catalyzes the conversion of uracil and 5-phospho-alpha-D-ribose 1-diphosphate (PRPP) to UMP and diphosphate. The polypeptide is Uracil phosphoribosyltransferase (Methanococcus maripaludis (strain C7 / ATCC BAA-1331)).